Reading from the N-terminus, the 256-residue chain is Probable histidine-binding protein (256 aa).

An N-terminal signal peptide occupies residues 1 to 19 (MKKFLTAFLVAFTGLFLVA). Residue Cys20 is the site of N-palmitoyl cysteine attachment. Cys20 carries S-diacylglycerol cysteine lipidation.

The protein belongs to the bacterial solute-binding protein 3 family.

Its subcellular location is the cell membrane. Involved in histidine transport. This chain is Probable histidine-binding protein (hisJ), found in Campylobacter jejuni subsp. jejuni serotype O:2 (strain ATCC 700819 / NCTC 11168).